A 281-amino-acid polypeptide reads, in one-letter code: Bifunctional protein FolD (281 aa).

Residue 163–165 (GRS) coordinates NADP(+).

It belongs to the tetrahydrofolate dehydrogenase/cyclohydrolase family. Homodimer.

It carries out the reaction (6R)-5,10-methylene-5,6,7,8-tetrahydrofolate + NADP(+) = (6R)-5,10-methenyltetrahydrofolate + NADPH. The enzyme catalyses (6R)-5,10-methenyltetrahydrofolate + H2O = (6R)-10-formyltetrahydrofolate + H(+). It participates in one-carbon metabolism; tetrahydrofolate interconversion. Its function is as follows. Catalyzes the oxidation of 5,10-methylenetetrahydrofolate to 5,10-methenyltetrahydrofolate and then the hydrolysis of 5,10-methenyltetrahydrofolate to 10-formyltetrahydrofolate. This Leuconostoc mesenteroides subsp. mesenteroides (strain ATCC 8293 / DSM 20343 / BCRC 11652 / CCM 1803 / JCM 6124 / NCDO 523 / NBRC 100496 / NCIMB 8023 / NCTC 12954 / NRRL B-1118 / 37Y) protein is Bifunctional protein FolD.